Reading from the N-terminus, the 835-residue chain is MPLEMDQKVNKLTFGCQRSSTSDDDSGCAMEEYTWVPPGLRLEQVQLYFACLPEEKIPYVNSVGEKYRIKQLLYQLPPHDNEVRYCQSLSEEEKKELQMFSAQRKKEALGRGNIKMLSRAVMHATCEKCGEKINGGEVAIFVSRAGPGVCWHPSCFVCSTCNELLVDLIYFYQDGKIHCGRHHAELLKPRCSACDEIIFADECTEAEGRHWHMNHFCCYECETVLGGQRYIMKDGRPFCCGCFESHYAEYCESCGEHIGVDHAQMTYDGQHWHATETCFSCAQCKVSLLGCPFLPKKGRIYCCKACSLGEDVHASDSSDSAFQSARSRESRRSVRMGKSSRSADQCRQSLLLSPAVNYKFPGMFGNADDTLSRKMDDLSMSRQGAGFDNDTWKARDEQETAEDHEEWAEHDDYMTQLLLKFGEKGLFQQPPEDNRSNDHWMSENIKGKNDLQRNNRNQSLASKKYQSDMYWAQSQDGLGDSAYGSHPGPASSRKLQELDMDHGASGYMHEKMPWYKRSLECLSNNLKPQNENICDSMDSLALSNITGASVDAESKSRPSLFSYQNFQELNTRDFDKMSNMGTLNSSMLNRSTESLKSLNSEICQEKPPPEEKPMHTSALKRSKSQTRPQVKFSDDVIDNGDYSSIEIRRPPMSERSRRRVYNSEEQSQRPHHHHHHRRRKSRKSRSENALHLATDSKSSGKERKRSYTAEDYERLFHNKSAHEVQAYIQNADLFGQYSNAASNVGLPSQVVDKFLGLYGEDEDSWCSTCSSSSSDSEEEGYFLGQPIPKPRPQRYQYFSDDLCSPTNALSSSQFSQRTSKSKKKKGHKGKNCIIS.

The region spanning 14–122 (FGCQRSSTSD…NIKMLSRAVM (109 aa)) is the PET domain. 3 LIM zinc-binding domains span residues 124 to 188 (ATCE…ELLK), 189 to 249 (PRCS…HYAE), and 250 to 313 (YCES…EDVH). 4 disordered regions span residues 312–346 (VHAS…ADQC), 426–455 (LFQQ…QRNN), 603–706 (CQEK…RKRS), and 769–835 (CSSS…CIIS). Basic and acidic residues-rich tracts occupy residues 432–453 (EDNR…DLQR), 603–614 (CQEKPPPEEKPM), and 646–655 (EIRRPPMSER). Composition is skewed to basic residues over residues 669 to 683 (RPHH…KSRK) and 819 to 835 (SKSK…CIIS). C832 carries the cysteine methyl ester modification. C832 carries the S-farnesyl cysteine lipid modification. A propeptide spans 833-835 (IIS) (removed in mature form).

Belongs to the prickle / espinas / testin family. As to quaternary structure, interacts with dvl2/dsh and mapk8/jnk1. Expressed in the dorsal marginal zone of early gastrulae (stage 10). As gastrulation proceeds, expression expands to include the lateral and ventral marginal zones, excluding the few rows of cells above the blastopore lip. Expression moves dorsally with gastrulation cell movements, and by the end of gastrulation expression is seen in dorsal mesoderm and posterior but not anterior neural ectoderm. Expression becomes down-regulated in mesoderm but remains strong in posterior ectoderm through the neurula stages. During tailbud stages, expressed in the pronephric duct, tailbud, tailtip and forming somites. In the most posterior regions, expressed in notochord and in the floorplate of the neural tube with weak expression in the roofplate. At stage 30, expressed in a complex pattern in the head including strong expression in the lens and otic vesicle.

Its subcellular location is the cell membrane. Acts in a planar cell polarity (PCP) complex; polarization along the apical/basal axis of epithelial cells. Regulates the polarized assembly of fibronectrin on the surface of the mesoderm during gastrulation. Essential for gastrulation cell movements, cooperating with dvl2/dsh to activate jnk. Acts together with tes to control axial elongation. The protein is Prickle-like protein 1-A (prickle1-a) of Xenopus laevis (African clawed frog).